Here is a 63-residue protein sequence, read N- to C-terminus: Putative antitoxin AF_1084 (63 aa).

It belongs to the UPF0165 family.

In terms of biological role, possibly the antitoxin component of a type II toxin-antitoxin (TA) system. The polypeptide is Putative antitoxin AF_1084 (Archaeoglobus fulgidus (strain ATCC 49558 / DSM 4304 / JCM 9628 / NBRC 100126 / VC-16)).